A 1217-amino-acid polypeptide reads, in one-letter code: DNA-directed RNA polymerase subunit beta' (1217 aa).

Residues C60, C62, C75, and C78 each coordinate Zn(2+). Residues D449, D451, and D453 each contribute to the Mg(2+) site. Residues C821, C895, C902, and C905 each coordinate Zn(2+).

It belongs to the RNA polymerase beta' chain family. The RNAP catalytic core consists of 2 alpha, 1 beta, 1 beta' and 1 omega subunit. When a sigma factor is associated with the core the holoenzyme is formed, which can initiate transcription. Requires Mg(2+) as cofactor. It depends on Zn(2+) as a cofactor.

The enzyme catalyses RNA(n) + a ribonucleoside 5'-triphosphate = RNA(n+1) + diphosphate. Its function is as follows. DNA-dependent RNA polymerase catalyzes the transcription of DNA into RNA using the four ribonucleoside triphosphates as substrates. This chain is DNA-directed RNA polymerase subunit beta', found in Lactobacillus helveticus (strain DPC 4571).